The following is a 456-amino-acid chain: Chromosomal replication initiator protein DnaA (456 aa).

The tract at residues 1–73 is domain I, interacts with DnaA modulators; sequence MEIYLDNLWD…ADVVHDILGY (73 aa). The interval 73 to 117 is domain II; that stretch reads YPVEIYLTTFLVEDSRKNDSGLIWSEHKSVNILGENLSIPKPLPA. The domain III, AAA+ region stretch occupies residues 118–334; sequence NLNAKYMFSR…GALTRVVTYI (217 aa). Residues Gly162, Gly164, Lys165, and Thr166 each coordinate ATP. The tract at residues 335–456 is domain IV, binds dsDNA; that stretch reads SISGLPMTVE…SDRINFSSRH (122 aa).

This sequence belongs to the DnaA family. As to quaternary structure, oligomerizes as a right-handed, spiral filament on DNA at oriC.

It is found in the cytoplasm. Plays an essential role in the initiation and regulation of chromosomal replication. ATP-DnaA binds to the origin of replication (oriC) to initiate formation of the DNA replication initiation complex once per cell cycle. Binds the DnaA box (a 9 base pair repeat at the origin) and separates the double-stranded (ds)DNA. Forms a right-handed helical filament on oriC DNA; dsDNA binds to the exterior of the filament while single-stranded (ss)DNA is stabiized in the filament's interior. The ATP-DnaA-oriC complex binds and stabilizes one strand of the AT-rich DNA unwinding element (DUE), permitting loading of DNA polymerase. After initiation quickly degrades to an ADP-DnaA complex that is not apt for DNA replication. Binds acidic phospholipids. This Trichodesmium erythraeum (strain IMS101) protein is Chromosomal replication initiator protein DnaA.